The chain runs to 349 residues: Phosphoribosylformylglycinamidine cyclo-ligase (349 aa).

The protein belongs to the AIR synthase family.

The protein localises to the cytoplasm. It catalyses the reaction 2-formamido-N(1)-(5-O-phospho-beta-D-ribosyl)acetamidine + ATP = 5-amino-1-(5-phospho-beta-D-ribosyl)imidazole + ADP + phosphate + H(+). It participates in purine metabolism; IMP biosynthesis via de novo pathway; 5-amino-1-(5-phospho-D-ribosyl)imidazole from N(2)-formyl-N(1)-(5-phospho-D-ribosyl)glycinamide: step 2/2. The protein is Phosphoribosylformylglycinamidine cyclo-ligase of Bordetella parapertussis (strain 12822 / ATCC BAA-587 / NCTC 13253).